Here is a 1177-residue protein sequence, read N- to C-terminus: DNA-directed RNA polymerase subunit beta (1177 aa).

A compositionally biased stretch (acidic residues) spans D1147 to D1161. The interval D1147–E1177 is disordered. The span at H1162–E1177 shows a compositional bias: basic and acidic residues.

It belongs to the RNA polymerase beta chain family. The RNAP catalytic core consists of 2 alpha, 1 beta, 1 beta' and 1 omega subunit. When a sigma factor is associated with the core the holoenzyme is formed, which can initiate transcription.

The enzyme catalyses RNA(n) + a ribonucleoside 5'-triphosphate = RNA(n+1) + diphosphate. Functionally, DNA-dependent RNA polymerase catalyzes the transcription of DNA into RNA using the four ribonucleoside triphosphates as substrates. The polypeptide is DNA-directed RNA polymerase subunit beta (Bacillus cereus (strain G9842)).